A 471-amino-acid chain; its full sequence is E3 SUMO-protein ligase EGR2 (471 aa).

Positions 127 to 143 are enriched in low complexity; that stretch reads PASTTASSNVTSASPNP. A disordered region spans residues 127 to 177; sequence PASTTASSNVTSASPNPLATGPLGVCTMSQTQPDLDHLYSPPPPPPYSGCA. Position 246 is an N6-acetyllysine; by EP300 (K246). 2 disordered regions span residues 273–301 and 313–336; these read GGPS…AAAA and RPIL…RPYP. Gly residues predominate over residues 280–289; the sequence is TGPGASGGSE. 3 C2H2-type zinc fingers span residues 335-359, 365-387, and 393-415; these read YPCP…IRIH, FQCR…IRTH, and FACD…TKIH. The disordered stretch occupies residues 406–471; that stretch reads DERKRHTKIH…GPCSSRTRTP (66 aa). A compositionally biased stretch (basic residues) spans 410 to 420; sequence RHTKIHLRQKE. Low complexity predominate over residues 424 to 437; the sequence is SAPSSSVPAASTAS.

The protein belongs to the EGR C2H2-type zinc-finger protein family. In terms of assembly, interacts with HCFC1. Interacts with WWP2. Interacts with UBC9. Interacts with CITED1. Interacts (via phosphorylated form) with SFN. Post-translationally, ubiquitinated by WWP2 leading to proteasomal degradation. Acetylated at Lys-246. May be deacetylated by HDAC6, HDAC10 or SIRT1.

It localises to the nucleus. It functions in the pathway protein modification; protein sumoylation. Functionally, sequence-specific DNA-binding transcription factor. Plays a role in hindbrain segmentation by regulating the expression of a subset of homeobox containing genes and in Schwann cell myelination by regulating the expression of genes involved in the formation and maintenance of myelin. Binds to two EGR2-consensus sites EGR2A (5'-CTGTAGGAG-3') and EGR2B (5'-ATGTAGGTG-3') in the HOXB3 enhancer and promotes HOXB3 transcriptional activation. Binds to specific DNA sites located in the promoter region of HOXA4, HOXB2 and ERBB2. Regulates hindbrain segmentation by controlling the expression of Hox genes, such as HOXA4, HOXB3 and HOXB2, and thereby specifying odd and even rhombomeres. Promotes the expression of HOXB3 in the rhombomere r5 in the hindbrain. Regulates myelination in the peripheral nervous system after birth, possibly by regulating the expression of myelin proteins, such as MPZ, and by promoting the differentiation of Schwann cells. Involved in the development of the jaw openener musculature, probably by playing a role in its innervation through trigeminal motor neurons. May play a role in adipogenesis, possibly by regulating the expression of CEBPB. Its function is as follows. E3 SUMO-protein ligase helping SUMO1 conjugation to its coregulators NAB1 and NAB2, whose sumoylation down-regulates EGR2 transcriptional activity. The protein is E3 SUMO-protein ligase EGR2 (EGR2) of Sus scrofa (Pig).